The sequence spans 120 residues: UPF0231 protein YacL (120 aa).

It belongs to the UPF0231 family.

This chain is UPF0231 protein YacL, found in Salmonella heidelberg (strain SL476).